Reading from the N-terminus, the 142-residue chain is Large ribosomal subunit protein uL13 (142 aa).

It belongs to the universal ribosomal protein uL13 family. Part of the 50S ribosomal subunit.

In terms of biological role, this protein is one of the early assembly proteins of the 50S ribosomal subunit, although it is not seen to bind rRNA by itself. It is important during the early stages of 50S assembly. The polypeptide is Large ribosomal subunit protein uL13 (Cronobacter sakazakii (strain ATCC BAA-894) (Enterobacter sakazakii)).